Reading from the N-terminus, the 135-residue chain is Ribonuclease P protein component (135 aa).

It belongs to the RnpA family. Consists of a catalytic RNA component (M1 or rnpB) and a protein subunit.

The catalysed reaction is Endonucleolytic cleavage of RNA, removing 5'-extranucleotides from tRNA precursor.. Functionally, RNaseP catalyzes the removal of the 5'-leader sequence from pre-tRNA to produce the mature 5'-terminus. It can also cleave other RNA substrates such as 4.5S RNA. The protein component plays an auxiliary but essential role in vivo by binding to the 5'-leader sequence and broadening the substrate specificity of the ribozyme. This Pseudomonas aeruginosa (strain LESB58) protein is Ribonuclease P protein component.